We begin with the raw amino-acid sequence, 541 residues long: Atlastin-3 (541 aa).

The disordered stretch occupies residues 1–22 (MLSPQRTAAVASRGAGDAMENG). The N-terminal hypervariable region (HVR) stretch occupies residues 1–25 (MLSPQRTAAVASRGAGDAMENGKPG). Over 1–445 (MLSPQRTAAV…NVFSTFRTPA (445 aa)) the chain is Cytoplasmic. Positions 57-306 (DLDVVVVSVA…LIPYVLNPSK (250 aa)) constitute a GB1/RHD3-type G domain. The GDP site is built by Arg70, Lys71, Gly72, Lys73, Ser74, Phe75, and Arg109. Position 142 (Asp142) interacts with Mg(2+). 4 residues coordinate GDP: Arg213, Asp214, Val272, and Ser275. A 3HB (three-helix bundle) domain region spans residues 344–434 (MLQATAANNL…YENFCKHNGS (91 aa)). Lys391 bears the N6-acetyllysine mark. The chain crosses the membrane as a helical span at residues 446–466 (VLFTGIAVLYIASGLTGFIGL). Position 467 (Glu467) is a topological domain, lumenal. A helical transmembrane segment spans residues 468–488 (VVAQLFNCMVGLLLIALLTWG). Over 489 to 541 (YIRYSGQYLELGGAIDSGAAYVLEQASSHIGNSTQAAVRDAIAGRPPADKKSQ) the chain is Cytoplasmic.

It belongs to the TRAFAC class dynamin-like GTPase superfamily. GB1/RHD3 GTPase family. GB1 subfamily. In terms of assembly, monomeric and homodimeric. The homodimer, transiently formed by two molecules on opposing membranes, is the active form mediating ER membrane fusion. Interacts with ZFYVE27; both proteins are involved in endoplasmic reticulum tubular network organization. Interacts with REEP5; both proteins are involved in endoplasmic reticulum tubular network organization.

The protein resides in the endoplasmic reticulum membrane. It catalyses the reaction GTP + H2O = GDP + phosphate + H(+). Atlastin-3 (ATL3) is a membrane-anchored GTPase that mediates the GTP-dependent fusion of endoplasmic reticulum (ER) membranes, maintaining the continuous ER network. It facilitates the formation of three-way junctions where ER tubules intersect. Two atlastin-3 on neighboring ER tubules bind GTP and form loose homodimers through the GB1/RHD3-type G domains and 3HB regions. Upon GTP hydrolysis, the 3HB regions tighten, pulling the membranes together to drive their fusion. After fusion, the homodimer disassembles upon release of inorganic phosphate (Pi). Subsequently, GDP dissociates, resetting the monomers to a conformation ready for a new fusion cycle. The chain is Atlastin-3 from Rattus norvegicus (Rat).